The following is a 68-amino-acid chain: uncharacterized protein (68 aa).

This is an uncharacterized protein from Bacillus subtilis (strain 168).